A 357-amino-acid polypeptide reads, in one-letter code: MTIGREKMKVEEILENARKAFKLTTKHFGNTVTFERALFLGWYCNLKQPCKFCYMATQKNKIKDPRKARRRLESVLAEAILMKRIGWKLEFISGGYGYTPKEINDIAEMVAYVQKCRQYLNVGVIDLDNINLDVIEGVVGAVETVSKDRDWICPGKPLDKIKDNLLKAKELGLKTGITIILGLGEKEEDIEKLLNLIEELDLNRITFYSLNPQKGTIYENKPSVTTIEYMNWVSSVRLNFPKIKIITGVWVDKIPMISPLIMSGSNVITKFPLFSVFGTKEAHWIEKEILATGRELLGTFTDIDILAGKKVLEKTPYIEEEINISSENIKRVEELRENINERIESYVSKVLRKIKAS.

One can recognise a Radical SAM core domain in the interval 27–242 (HFGNTVTFER…VSSVRLNFPK (216 aa)). [4Fe-4S] cluster is bound by residues Cys44, Cys50, and Cys53.

The cofactor is [4Fe-4S] cluster.

This is an uncharacterized protein from Methanocaldococcus jannaschii (strain ATCC 43067 / DSM 2661 / JAL-1 / JCM 10045 / NBRC 100440) (Methanococcus jannaschii).